Here is a 127-residue protein sequence, read N- to C-terminus: Small ribosomal subunit protein uS13 (127 aa).

The protein belongs to the universal ribosomal protein uS13 family. Part of the 30S ribosomal subunit. Forms a loose heterodimer with protein S19. Forms two bridges to the 50S subunit in the 70S ribosome.

In terms of biological role, located at the top of the head of the 30S subunit, it contacts several helices of the 16S rRNA. In the 70S ribosome it contacts the 23S rRNA (bridge B1a) and protein L5 of the 50S subunit (bridge B1b), connecting the 2 subunits; these bridges are implicated in subunit movement. Contacts the tRNAs in the A and P-sites. The sequence is that of Small ribosomal subunit protein uS13 from Roseiflexus sp. (strain RS-1).